The following is a 398-amino-acid chain: MKILVLNSGSSSLKYQLFDMEKETVMAKGVVQRIGIDNSFLEHENYRGEETTIETDIPDHNRGIQLVIDTLQDEKYGVLNNMEEIDAVGHRVVHGGEKFAESTLITDEVIKQIEEVSELAPLHNPHNLTGIRVCSKLMPGIPQVAVFDTAFHQTMPRKAYVYALPYEYYEKYGIRRYGFHGTSHKYVAERAARLMDKPLEELKIITCHLGNGASVAAIDAGKSVDTSMGLTPLEGLVMGTRCGDIDPAIIPFIMDKENLDIKEVDNVLNKKSGLYGVSGISNDSRDVEEASKDGNERATIALEIFKYRVKKYIGAYTAVMGGVDAVVFTAGIGENAIEMRESIVEELGFLGVKLDRDANNNRGKEIEISTKDSRTKIFVIPTNEELVIARDTARIVES.

Asn7 is a binding site for Mg(2+). Lys14 lines the ATP pocket. Residue Arg91 participates in substrate binding. Residue Asp148 is the Proton donor/acceptor of the active site. Residues 208 to 212 (HLGNG), 283 to 285 (DSR), and 331 to 335 (GIGEN) each bind ATP. Glu384 is a Mg(2+) binding site.

It belongs to the acetokinase family. In terms of assembly, homodimer. The cofactor is Mg(2+). Mn(2+) is required as a cofactor.

It is found in the cytoplasm. It catalyses the reaction acetate + ATP = acetyl phosphate + ADP. It functions in the pathway metabolic intermediate biosynthesis; acetyl-CoA biosynthesis; acetyl-CoA from acetate: step 1/2. Its function is as follows. Catalyzes the formation of acetyl phosphate from acetate and ATP. Can also catalyze the reverse reaction. This is Acetate kinase from Halothermothrix orenii (strain H 168 / OCM 544 / DSM 9562).